The following is a 353-amino-acid chain: Serine proteinase inhibitor 1 (353 aa).

Belongs to the serpin family. Poxviruses subfamily.

It localises to the host cytoplasm. Plays a role in mediating viral host range. May act to inhibit a caspase independent form of apoptosis to allow efficient virus replication in infected cells. In Vaccinia virus (strain Copenhagen) (VACV), this protein is Serine proteinase inhibitor 1 (OPG208).